The chain runs to 450 residues: UDP-N-acetylmuramoylalanine--D-glutamate ligase (450 aa).

119–125 (GSNGKTT) is an ATP binding site.

Belongs to the MurCDEF family.

Its subcellular location is the cytoplasm. The enzyme catalyses UDP-N-acetyl-alpha-D-muramoyl-L-alanine + D-glutamate + ATP = UDP-N-acetyl-alpha-D-muramoyl-L-alanyl-D-glutamate + ADP + phosphate + H(+). It participates in cell wall biogenesis; peptidoglycan biosynthesis. Cell wall formation. Catalyzes the addition of glutamate to the nucleotide precursor UDP-N-acetylmuramoyl-L-alanine (UMA). In Streptococcus pneumoniae (strain ATCC BAA-255 / R6), this protein is UDP-N-acetylmuramoylalanine--D-glutamate ligase.